We begin with the raw amino-acid sequence, 261 residues long: Small ribosomal subunit protein eS1A (261 aa).

Positions 1–18 (MTLGKNKRISKGGKRGKK) are enriched in basic residues. Residues 1 to 23 (MTLGKNKRISKGGKRGKKKTQET) are disordered.

This sequence belongs to the eukaryotic ribosomal protein eS1 family. As to quaternary structure, component of the small ribosomal subunit. Mature ribosomes consist of a small (40S) and a large (60S) subunit. The 40S subunit contains about 33 different proteins and 1 molecule of RNA (18S). The 60S subunit contains about 49 different proteins and 3 molecules of RNA (25S, 5.8S and 5S).

The protein resides in the cytoplasm. This Trypanosoma cruzi (strain CL Brener) protein is Small ribosomal subunit protein eS1A.